A 271-amino-acid polypeptide reads, in one-letter code: MPPTVFIVSDGTGITAETFAHSILSQFDQKFRLVRVPFVDSTEKAYATLEKINEAILQDGRRPIVFTTLVDSASNQIVKGSNALVLDMFQTFVEPLEQELELKSSHAMGRGHQNADTEEYKNRIEAINFSLAHDDGQSNRNLADADVILVGVSRSGKTPTSLYLAMQYGVKAANYPLIPEDFERGKLPTPLLAHRQKMFGLSIDPQRLSEIRNERRPGSKYAAPENCRYEINEAEAMMRREGIKWLSSTHKSIEEIATTILQEIKLERAAY.

151–158 (GVSRSGKT) is an ADP binding site.

This sequence belongs to the pyruvate, phosphate/water dikinase regulatory protein family. PSRP subfamily.

The catalysed reaction is [pyruvate, water dikinase] + ADP = [pyruvate, water dikinase]-phosphate + AMP + H(+). The enzyme catalyses [pyruvate, water dikinase]-phosphate + phosphate + H(+) = [pyruvate, water dikinase] + diphosphate. Bifunctional serine/threonine kinase and phosphorylase involved in the regulation of the phosphoenolpyruvate synthase (PEPS) by catalyzing its phosphorylation/dephosphorylation. This chain is Putative phosphoenolpyruvate synthase regulatory protein, found in Paraburkholderia xenovorans (strain LB400).